The following is a 447-amino-acid chain: Tubulin beta-2 chain (447 aa).

Gln-11, Glu-69, Ser-138, Gly-142, Thr-143, Gly-144, Asn-204, and Asn-226 together coordinate GTP. Position 69 (Glu-69) interacts with Mg(2+). Residues 427 to 447 (DASISEGEEEYEEEQQLENEE) are disordered. Over residues 432 to 447 (EGEEEYEEEQQLENEE) the composition is skewed to acidic residues.

Belongs to the tubulin family. In terms of assembly, dimer of alpha and beta chains. A typical microtubule is a hollow water-filled tube with an outer diameter of 25 nm and an inner diameter of 15 nM. Alpha-beta heterodimers associate head-to-tail to form protofilaments running lengthwise along the microtubule wall with the beta-tubulin subunit facing the microtubule plus end conferring a structural polarity. Microtubules usually have 13 protofilaments but different protofilament numbers can be found in some organisms and specialized cells. The cofactor is Mg(2+).

It localises to the cytoplasm. The protein localises to the cytoskeleton. Functionally, tubulin is the major constituent of microtubules, a cylinder consisting of laterally associated linear protofilaments composed of alpha- and beta-tubulin heterodimers. Microtubules grow by the addition of GTP-tubulin dimers to the microtubule end, where a stabilizing cap forms. Below the cap, tubulin dimers are in GDP-bound state, owing to GTPase activity of alpha-tubulin. The chain is Tubulin beta-2 chain (TUB2) from Erysiphe pisi (Pea powdery mildew).